Here is a 184-residue protein sequence, read N- to C-terminus: Ribosome maturation factor RimP (184 aa).

Belongs to the RimP family.

The protein localises to the cytoplasm. Its function is as follows. Required for maturation of 30S ribosomal subunits. The sequence is that of Ribosome maturation factor RimP from Zymomonas mobilis subsp. mobilis (strain ATCC 31821 / ZM4 / CP4).